The chain runs to 771 residues: Polymeric immunoglobulin receptor (771 aa).

Positions 1 to 18 (MRLYLFTLLVTVFSGVST) are cleaved as a signal peptide. Over 19-645 (KSPIFGPQEV…DGQSRSSSSK (627 aa)) the chain is Extracellular. The Ig-like V-type 1; required for binding to polymeric IgA and IgM domain occupies 21–120 (PIFGPQEVSS…GLGTSNRGLS (100 aa)). Residues Cys-40 and Cys-110 are joined by a disulfide bond. 4 N-linked (GlcNAc...) asparagine glycosylation sites follow: Asn-90, Asn-147, Asn-170, and Asn-206. Ig-like V-type domains lie at 135-237 (SDTH…DLQV), 245-351 (LYKD…ESTI), 352-457 (PNRR…LQVA), and 463-563 (PNLE…IYIA). Disulfide bonds link Cys-152–Cys-220, Cys-257–Cys-324, and Cys-370–Cys-440. N-linked (GlcNAc...) asparagine glycosylation is found at Asn-420 and Asn-471. An intrachain disulfide couples Cys-484 to Cys-546. Residues 622-641 (QAQENRASGDAGSADGQSRS) are disordered. The span at 627–641 (RASGDAGSADGQSRS) shows a compositional bias: low complexity. Residues 646–668 (VLFSTLVPLGLVLAVGAIAVWVA) traverse the membrane as a helical segment. Topologically, residues 669-771 (RVRHRKNVDR…AQVHDGPQEA (103 aa)) are cytoplasmic. Residues Ser-680, Ser-689, Ser-696, and Ser-742 each carry the phosphoserine modification.

In terms of assembly, interacts (mainly via CDR1-like domain) with dimeric IgA. Interacts (mainly via CDR2-like domain) with pentameric IgM. Either free or part of the secretory IgA (sIgA) complex that consists of two, four or five IgA monomers, and two additional non-Ig polypeptides, namely the JCHAIN and the secretory component (the proteolytic product of PIGR). Free secretory component interacts with bacterial antigens toxA of C.difficile and eae of E.coli. In terms of processing, N-glycosylated. N-glycosylation is required for anchoring IgA molecules to mucus, but is not necessary for Ig binding.

It localises to the cell membrane. The protein localises to the secreted. In terms of biological role, mediates selective transcytosis of polymeric IgA and IgM across mucosal epithelial cells. Binds polymeric IgA and IgM at the basolateral surface of epithelial cells. The complex is then transported across the cell to be secreted at the apical surface. During this process, a cleavage occurs that separates the extracellular (known as the secretory component) from the transmembrane segment. Functionally, through its N-linked glycans ensures anchoring of secretory IgA (sIgA) molecules to mucus lining the epithelial surface to neutralize extracellular pathogens. On its own (free form) may act as a non-specific microbial scavenger to prevent pathogen interaction with epithelial cells. The polypeptide is Polymeric immunoglobulin receptor (Pigr) (Mus musculus (Mouse)).